The following is a 306-amino-acid chain: Zinc finger protein 625 (306 aa).

The C2H2-type 1; degenerate zinc finger occupies 31–53 (PRVKSCGEVSVGHASLNRHHRAD). C2H2-type zinc fingers lie at residues 69–91 (YKCT…EWAH), 97–119 (YDCE…RIMH), 125–147 (YKCN…KRTH), 153–175 (YECK…ERTH), 181–203 (YECS…KITH), 209–231 (YECK…ERTH), 237–259 (YECK…GRTH), and 265–287 (YECK…ERTH). At tyrosine 209 the chain carries Phosphotyrosine. Residues 287–306 (HTGEKPCSSNTSKGQGEKIA) form a disordered region.

Belongs to the krueppel C2H2-type zinc-finger protein family.

The protein resides in the nucleus. May be involved in transcriptional regulation. The chain is Zinc finger protein 625 (ZNF625) from Homo sapiens (Human).